The following is a 309-amino-acid chain: Homoserine kinase (309 aa).

Position 91-101 (91-101 (PIGSGLGSSAC)) interacts with ATP.

This sequence belongs to the GHMP kinase family. Homoserine kinase subfamily.

Its subcellular location is the cytoplasm. It carries out the reaction L-homoserine + ATP = O-phospho-L-homoserine + ADP + H(+). Its pathway is amino-acid biosynthesis; L-threonine biosynthesis; L-threonine from L-aspartate: step 4/5. Catalyzes the ATP-dependent phosphorylation of L-homoserine to L-homoserine phosphate. The polypeptide is Homoserine kinase (Photorhabdus laumondii subsp. laumondii (strain DSM 15139 / CIP 105565 / TT01) (Photorhabdus luminescens subsp. laumondii)).